We begin with the raw amino-acid sequence, 122 residues long: Large ribosomal subunit protein uL14 (122 aa).

Belongs to the universal ribosomal protein uL14 family. Part of the 50S ribosomal subunit. Forms a cluster with proteins L3 and L19. In the 70S ribosome, L14 and L19 interact and together make contacts with the 16S rRNA in bridges B5 and B8.

Functionally, binds to 23S rRNA. Forms part of two intersubunit bridges in the 70S ribosome. This Endomicrobium trichonymphae protein is Large ribosomal subunit protein uL14.